Consider the following 368-residue polypeptide: uncharacterized protein (368 aa).

The segment at glutamate 237–alanine 287 is disordered. The segment covering serine 238–isoleucine 253 has biased composition (low complexity). The span at phenylalanine 264–arginine 276 shows a compositional bias: polar residues.

This is an uncharacterized protein from Schizosaccharomyces pombe (strain 972 / ATCC 24843) (Fission yeast).